We begin with the raw amino-acid sequence, 490 residues long: Protein twist (490 aa).

3 disordered regions span residues 48–74, 98–167, and 330–359; these read QLQHQQQHLHSHQHHQQHQQQQQQHTQ, PSNE…TGGS, and LDGSDAGGKAFRKPRRRLKRKPSKTEETDE. Residues 54 to 64 are compositionally biased toward basic residues; that stretch reads QHLHSHQHHQQ. Low complexity-rich tracts occupy residues 65 to 74 and 104 to 135; these read HQQQQQQHTQ and STSSNQSAQSTSLEMNNNNTSSNNTSSGNNPS. A compositionally biased stretch (basic residues) spans 339 to 351; sequence AFRKPRRRLKRKP. The bHLH domain occupies 362 to 413; that stretch reads NQRVMANVRERQRTQSLNDAFKSLQQIIPTLPSDKLSKIQTLKLATRYIDFL.

Efficient DNA binding requires dimerization with another bHLH protein. Homodimer.

The protein resides in the nucleus. In terms of biological role, involved in the establishment and dorsoventral patterning of germ layers in the embryo. The protein is Protein twist of Drosophila erecta (Fruit fly).